Consider the following 533-residue polypeptide: Retinoid isomerohydrolase (533 aa).

At serine 2 the chain carries N-acetylserine. Threonine 101 and threonine 105 each carry phosphothreonine. Cysteine 112 is lipidated: S-palmitoyl cysteine; in membrane form. At lysine 113 the chain carries N6-acetyllysine. Serine 117 carries the post-translational modification Phosphoserine. Position 180 (histidine 180) interacts with Fe cation. Residue cysteine 231 is the site of S-palmitoyl cysteine; in membrane form attachment. The Fe cation site is built by histidine 241 and histidine 313. S-palmitoyl cysteine; in membrane form attachment occurs at residues cysteine 329 and cysteine 330. Histidine 527 serves as a coordination point for Fe cation.

It belongs to the carotenoid oxygenase family. In terms of assembly, interacts with MYO7A; this mediates light-dependent intracellular transport of RPE65. The cofactor is Fe(2+). In terms of processing, palmitoylation by LRAT regulates ligand binding specificity; the palmitoylated form (membrane form) specifically binds all-trans-retinyl-palmitate, while the soluble unpalmitoylated form binds all-trans-retinol (vitamin A). As to expression, retinal pigment epithelium specific.

It is found in the cytoplasm. The protein resides in the cell membrane. The protein localises to the microsome membrane. It carries out the reaction an all-trans-retinyl ester + H2O = 11-cis-retinol + a fatty acid + H(+). The enzyme catalyses lutein = (3R,3'S)-zeaxanthin. The catalysed reaction is all-trans-retinyl hexadecanoate + H2O = 11-cis-retinol + hexadecanoate + H(+). Critical isomerohydrolase in the retinoid cycle involved in regeneration of 11-cis-retinal, the chromophore of rod and cone opsins. Catalyzes the cleavage and isomerization of all-trans-retinyl fatty acid esters to 11-cis-retinol which is further oxidized by 11-cis retinol dehydrogenase to 11-cis-retinal for use as visual chromophore. Essential for the production of 11-cis retinal for both rod and cone photoreceptors. Also capable of catalyzing the isomerization of lutein to meso-zeaxanthin an eye-specific carotenoid. The soluble form binds vitamin A (all-trans-retinol), making it available for LRAT processing to all-trans-retinyl ester. The membrane form, palmitoylated by LRAT, binds all-trans-retinyl esters, making them available for IMH (isomerohydrolase) processing to all-cis-retinol. The soluble form is regenerated by transferring its palmitoyl groups onto 11-cis-retinol, a reaction catalyzed by LRAT. This is Retinoid isomerohydrolase (RPE65) from Bos taurus (Bovine).